Reading from the N-terminus, the 381-residue chain is L-lactate dehydrogenase A-like 6B (381 aa).

NAD(+) contacts are provided by residues 101-106 and arginine 148; that span reads DVDEGR. Positions 155, 187, and 218 each coordinate substrate. Asparagine 187 serves as a coordination point for NAD(+). Histidine 242 functions as the Proton acceptor in the catalytic mechanism. Residue threonine 297 coordinates substrate.

This sequence belongs to the LDH/MDH superfamily. LDH family.

It catalyses the reaction (S)-lactate + NAD(+) = pyruvate + NADH + H(+). It participates in fermentation; pyruvate fermentation to lactate; (S)-lactate from pyruvate: step 1/1. The sequence is that of L-lactate dehydrogenase A-like 6B (LDHAL6B) from Bos taurus (Bovine).